The sequence spans 230 residues: Octanoyltransferase (230 aa).

The 178-residue stretch at 38 to 215 folds into the BPL/LPL catalytic domain; it reads AGGADTLLLL…AVCAALDGVL (178 aa). Substrate-binding positions include 76 to 83, 145 to 147, and 158 to 160; these read RGGKITWH, AIG, and GFA. Residue C176 is the Acyl-thioester intermediate of the active site.

This sequence belongs to the LipB family.

Its subcellular location is the cytoplasm. The enzyme catalyses octanoyl-[ACP] + L-lysyl-[protein] = N(6)-octanoyl-L-lysyl-[protein] + holo-[ACP] + H(+). The protein operates within protein modification; protein lipoylation via endogenous pathway; protein N(6)-(lipoyl)lysine from octanoyl-[acyl-carrier-protein]: step 1/2. In terms of biological role, catalyzes the transfer of endogenously produced octanoic acid from octanoyl-acyl-carrier-protein onto the lipoyl domains of lipoate-dependent enzymes. Lipoyl-ACP can also act as a substrate although octanoyl-ACP is likely to be the physiological substrate. This Mycobacterium bovis (strain BCG / Tokyo 172 / ATCC 35737 / TMC 1019) protein is Octanoyltransferase.